The following is a 164-amino-acid chain: General odorant-binding protein 1 (164 aa).

The signal sequence occupies residues 1–19 (MPGVLRALLLLAAAAPLLA). 3 disulfide bridges follow: Cys-38/Cys-73, Cys-69/Cys-127, and Cys-116/Cys-136.

Belongs to the PBP/GOBP family. Antenna.

Functionally, present in the aqueous fluid surrounding olfactory sensory dendrites and are thought to aid in the capture and transport of hydrophobic odorants into and through this fluid. This is General odorant-binding protein 1 from Heliothis virescens (Tobacco budworm moth).